Consider the following 1013-residue polypeptide: Lysosomal alpha-mannosidase (1013 aa).

A signal peptide spans Met1–Ala49. Intrachain disulfides connect Cys55-Cys358 and Cys268-Cys273. 3 residues coordinate Zn(2+): His72, Asp74, and Asp196. The Nucleophile role is filled by Asp196. N-linked (GlcNAc...) asparagine glycans are attached at residues Asn310, Asn345, and Asn367. Residues Cys412 and Cys472 are joined by a disulfide bond. His446 provides a ligand contact to Zn(2+). Asn489, Asn497, Asn544, Asn633, Asn646, Asn693, Asn767, and Asn931 each carry an N-linked (GlcNAc...) asparagine glycan. A disulfide bridge connects residues Cys493 and Cys501.

The protein belongs to the glycosyl hydrolase 38 family. It depends on Zn(2+) as a cofactor.

Its subcellular location is the lysosome. It catalyses the reaction Hydrolysis of terminal, non-reducing alpha-D-mannose residues in alpha-D-mannosides.. In terms of biological role, necessary for the catabolism of N-linked carbohydrates released during glycoprotein turnover. This is Lysosomal alpha-mannosidase (Man2b1) from Mus musculus (Mouse).